The sequence spans 240 residues: Phosducin-like protein 2 (240 aa).

The Phosducin domain maps to 54-214 (QRDKKIDDMS…MLGQAGAVPT (161 aa)). Serine 63 and serine 73 each carry phosphoserine. Residues 99 to 240 (FGSVREISGQ…DLEDKSSDFY (142 aa)) form a thioredoxin fold region.

It belongs to the phosducin family.

It localises to the cytoplasm. Modulates the activation of caspases during apoptosis. The sequence is that of Phosducin-like protein 2 from Drosophila melanogaster (Fruit fly).